The primary structure comprises 659 residues: tRNA-guanine(15) transglycosylase (659 aa).

D84 serves as the catalytic Nucleophile. Substrate contacts are provided by D119 and A190. Zn(2+) contacts are provided by C273, C275, and C278. In terms of domain architecture, PUA spans 583-658 (KNRVVVNKDS…QAIKTRKGMK (76 aa)).

Belongs to the archaeosine tRNA-ribosyltransferase family. Requires Zn(2+) as cofactor.

It carries out the reaction guanosine(15) in tRNA + 7-cyano-7-deazaguanine = 7-cyano-7-carbaguanosine(15) in tRNA + guanine. Its pathway is tRNA modification; archaeosine-tRNA biosynthesis. Functionally, exchanges the guanine residue with 7-cyano-7-deazaguanine (preQ0) at position 15 in the dihydrouridine loop (D-loop) of archaeal tRNAs. This is tRNA-guanine(15) transglycosylase from Methanobrevibacter smithii (strain ATCC 35061 / DSM 861 / OCM 144 / PS).